The chain runs to 384 residues: 8-amino-7-oxononanoate synthase (384 aa).

Arg-21 contributes to the substrate binding site. 108–109 (GF) lines the pyridoxal 5'-phosphate pocket. A substrate-binding site is contributed by His-133. Pyridoxal 5'-phosphate-binding residues include Ser-179, His-207, and Thr-233. Lys-236 carries the N6-(pyridoxal phosphate)lysine modification. Residue Thr-352 participates in substrate binding.

Belongs to the class-II pyridoxal-phosphate-dependent aminotransferase family. BioF subfamily. In terms of assembly, homodimer. Requires pyridoxal 5'-phosphate as cofactor.

The enzyme catalyses 6-carboxyhexanoyl-[ACP] + L-alanine + H(+) = (8S)-8-amino-7-oxononanoate + holo-[ACP] + CO2. Its pathway is cofactor biosynthesis; biotin biosynthesis. Catalyzes the decarboxylative condensation of pimeloyl-[acyl-carrier protein] and L-alanine to produce 8-amino-7-oxononanoate (AON), [acyl-carrier protein], and carbon dioxide. The protein is 8-amino-7-oxononanoate synthase of Shigella flexneri serotype 5b (strain 8401).